Consider the following 222-residue polypeptide: Peptide methionine sulfoxide reductase MsrA (222 aa).

Cysteine 60 is an active-site residue.

Belongs to the MsrA Met sulfoxide reductase family.

It catalyses the reaction L-methionyl-[protein] + [thioredoxin]-disulfide + H2O = L-methionyl-(S)-S-oxide-[protein] + [thioredoxin]-dithiol. The catalysed reaction is [thioredoxin]-disulfide + L-methionine + H2O = L-methionine (S)-S-oxide + [thioredoxin]-dithiol. In terms of biological role, has an important function as a repair enzyme for proteins that have been inactivated by oxidation. Catalyzes the reversible oxidation-reduction of methionine sulfoxide in proteins to methionine. This Pseudomonas putida (strain ATCC 47054 / DSM 6125 / CFBP 8728 / NCIMB 11950 / KT2440) protein is Peptide methionine sulfoxide reductase MsrA.